The following is a 370-amino-acid chain: Transcription factor E2F2 (370 aa).

The tract at residues 1-73 (MYKRKTASIV…QSQSQPGQQR (73 aa)) is disordered. A compositionally biased stretch (low complexity) spans 15–26 (SAAGTTSSAMMM). Positions 31–49 (AETSVRSQSYESTPVSMDT) are enriched in polar residues. Positions 59-73 (SPSNSQSQSQPGQQR) are enriched in low complexity. A DNA-binding region spans residues 72–137 (QRSVGSLVLL…GRHCSLVRWR (66 aa)). The dimerization stretch occupies residues 137–226 (RGGGFNNAKD…VDIKRNHYEL (90 aa)).

This sequence belongs to the E2F/DP family. In terms of assembly, forms a heterodimer with Dp. Interacts with Rbf/Rbf1 and Rbf2. Component of the DREAM complex, which is at least composed of Myb, Caf1-55, mip40, mip120, mip130, E2f2, Dp, Rbf, Rbf2, lin-52, HDAC1/Rpd3 and l(3)mbt. In terms of tissue distribution, ubiquitously expressed in eye disk.

It is found in the nucleus. Its function is as follows. Transcriptional repressor that binds to E2f sites and represses E2f-regulated target genes. Binding to E2f sites requires transcription factor Dp. Acts synergistically with Rbf2 to antagonize E2f1-mediated transcriptional activation. Component of the DREAM complex, a multiprotein complex that can both act as a transcription activator or repressor depending on the context. The DREAM complex is required for recruiting E2f2 at differentiation-specific promoters and for stabilizing E2f2-Rbf complexes during S phase. During development, the complex represses transcription of developmentally controlled E2f target genes. During oogenesis, plays a role in restricting DNA synthesis to sites of chorion gene amplification in late stage ovarian follicle cells. Plays an inhibitory role in ionizing radiation (IR)-induced p53-independent apoptosis. May be involved in cell cycle exit by temporarily limiting CycE-dependent activation of E2f-regulated transcription. This chain is Transcription factor E2F2 (E2f2), found in Drosophila melanogaster (Fruit fly).